Here is a 1176-residue protein sequence, read N- to C-terminus: Translation initiation factor IF-2 (1176 aa).

Composition is skewed to low complexity over residues 32-44 (IAAK…ISDS), 57-79 (ASPS…AGKS), 94-166 (APVA…AAPS), and 193-235 (KPTP…VKPT). Disordered stretches follow at residues 32–502 (IAAK…QRQK) and 535–567 (RPAK…RQRR). A compositionally biased stretch (pro residues) spans 251 to 270 (APPPASTPRPAPSRPTPRPA). Low complexity-rich tracts occupy residues 388–409 (GRPG…GGMR) and 439–469 (NRPT…FRPG). Residues 478-492 (GRPDWDDSAKLEALR) are compositionally biased toward basic and acidic residues. Positions 553–567 (VRKRRKETARQRQRR) are enriched in basic residues. The tr-type G domain occupies 668 to 840 (RRPPVVTVMG…LLLVTEVEDL (173 aa)). The interval 677–684 (GHVDHGKT) is G1. 677–684 (GHVDHGKT) contributes to the GTP binding site. Positions 702-706 (GITQH) are G2. A G3 region spans residues 727-730 (DTPG). GTP is bound by residues 727–731 (DTPGH) and 781–784 (NKID). The tract at residues 781 to 784 (NKID) is G4. The interval 817 to 819 (SAI) is G5.

The protein belongs to the TRAFAC class translation factor GTPase superfamily. Classic translation factor GTPase family. IF-2 subfamily.

It is found in the cytoplasm. One of the essential components for the initiation of protein synthesis. Protects formylmethionyl-tRNA from spontaneous hydrolysis and promotes its binding to the 30S ribosomal subunits. Also involved in the hydrolysis of GTP during the formation of the 70S ribosomal complex. The sequence is that of Translation initiation factor IF-2 from Synechococcus sp. (strain CC9902).